A 642-amino-acid polypeptide reads, in one-letter code: MSDIITVTLPDGSQKQTARGTTIADFVRESIGPGLAKAALFARVNGQDMDLARKLDEDVKLQIFTPKSPESLELIRHDAAHVVASAVQKLFPGTQVTIGPATEEGFYYDFFREKPFTPEDLEKIEAEANAELKRDMAFVRTEISMDEAVRLFEEKGEKFKVEIVKDIAAKGAKTLTLYTHGDWVDFCLGPHAPSTGKIGIIKILSSSGAYWRGDHRNPMLQRVYGTAFFDKKQLAEYLTRIEESKKRDHRKLGKELDLFHFHPYSPGSAFWTPKGTTLYTTLSNWMRQLTQNDGYVEIKTPLMFNKGLWETSGHWGKYKENMFLVLDSESGEHDFSLKPMNCPSHHLFYGFKKHSYRDLPLRYHTQDVLHRNEAAGSLGGLTRVRQFAQDDAHIYCTEAQITDEVRRFVKLLDHVYKAVGLTYAVKLSTRPEQRLGDDSLWDRAEGGLKAALESLGLEYELAPGDGAFYGPKIDFAVSDSIGRRWQLGTMQLDYLAPERFDLTYVGEDNAEHRPVVLHRAIFGSFERFTAILIEHFAGAFPAWLAPIQAVLVTVADRQNDYARKVRDSLRAKGYRVEFDERGLSMNAKIREAQLQKVPFTLVVGDNEVSGEGVSPRRYGGEDLKTMKVTDFEALLAKEAALP.

The 65-residue stretch at 1-65 folds into the TGS domain; it reads MSDIITVTLP…DEDVKLQIFT (65 aa). Residues 248–541 are catalytic; sequence DHRKLGKELD…LIEHFAGAFP (294 aa). Positions 342, 393, and 518 each coordinate Zn(2+).

It belongs to the class-II aminoacyl-tRNA synthetase family. As to quaternary structure, homodimer. Zn(2+) serves as cofactor.

Its subcellular location is the cytoplasm. It catalyses the reaction tRNA(Thr) + L-threonine + ATP = L-threonyl-tRNA(Thr) + AMP + diphosphate + H(+). Its function is as follows. Catalyzes the attachment of threonine to tRNA(Thr) in a two-step reaction: L-threonine is first activated by ATP to form Thr-AMP and then transferred to the acceptor end of tRNA(Thr). Also edits incorrectly charged L-seryl-tRNA(Thr). The chain is Threonine--tRNA ligase from Myxococcus xanthus (strain DK1622).